Consider the following 562-residue polypeptide: MRSDMIKKGDHQAPARSLLHATGALKSPTDMNKPFVAICNSYIDIVPGHVHLRELADIAKEAIREAGAIPFEFNTIGVDDGIAMGHIGMRYSLPSREIIADAAETVINAHWFDGVFYIPNCDKITPGMILAAMRTNVPAIFCSGGPMKAGLSAHGKALTLSSMFEAVGAFKKGSISKEEFLDMEQNACPTCGSCAGMFTANSMNCLMEVLGLALPYNGTALAVSDQRREMIRQAAFKLVENIKNDLKPRDIVTREAIDDAFALDMAMGGSTNTVLHTLAIANEAGIDYDLERINAIAKRTPYLSKIAPSSSYSMHDVHEAGGVPAIINELMKKDGTLHPDRITVTGKTLRENNEGKEIKNFDVIHPLDAPYDAQGGLSILFGNIAPKGAVIKVGGVDPSIKTFTGKAICFNSHDEAVEAIDNRTVRAGHVVVIRYEGPKGGPGMPEMLAPTSSIVGRGLGKDVALITDGRFSGATRGIAVGHISPEAASGGPIALIEDGDEITIDLTNRTLNVNQPEDVLARRRESLTPFKAKVKTGYLARYTALVTSANTGGVMQVPENLI.

D80 is a binding site for Mg(2+). Residue C121 participates in [2Fe-2S] cluster binding. Residues D122 and K123 each coordinate Mg(2+). Residue K123 is modified to N6-carboxylysine. Residue C194 coordinates [2Fe-2S] cluster. Residue E446 participates in Mg(2+) binding. The Proton acceptor role is filled by S472.

Belongs to the IlvD/Edd family. In terms of assembly, homodimer. It depends on [2Fe-2S] cluster as a cofactor. Requires Mg(2+) as cofactor.

It catalyses the reaction (2R)-2,3-dihydroxy-3-methylbutanoate = 3-methyl-2-oxobutanoate + H2O. The enzyme catalyses (2R,3R)-2,3-dihydroxy-3-methylpentanoate = (S)-3-methyl-2-oxopentanoate + H2O. The protein operates within amino-acid biosynthesis; L-isoleucine biosynthesis; L-isoleucine from 2-oxobutanoate: step 3/4. Its pathway is amino-acid biosynthesis; L-valine biosynthesis; L-valine from pyruvate: step 3/4. Its function is as follows. Functions in the biosynthesis of branched-chain amino acids. Catalyzes the dehydration of (2R,3R)-2,3-dihydroxy-3-methylpentanoate (2,3-dihydroxy-3-methylvalerate) into 2-oxo-3-methylpentanoate (2-oxo-3-methylvalerate) and of (2R)-2,3-dihydroxy-3-methylbutanoate (2,3-dihydroxyisovalerate) into 2-oxo-3-methylbutanoate (2-oxoisovalerate), the penultimate precursor to L-isoleucine and L-valine, respectively. This chain is Dihydroxy-acid dehydratase, found in Staphylococcus aureus (strain bovine RF122 / ET3-1).